The chain runs to 782 residues: MKISSGAINFSTIPNQVKKLITSIREHTKNGLTSKITSVKNTHTSLNEKFKTGKDSPIEFALPQKIKDFFQPKDKNTLNKTLITVKNIKDTNNAGKKNISAEDVSKMNAAFMRKHIANQTCDYNYRMTGAAPLPGGVSVSANNRPTVSEGRTPPVSPSLSLQATSSPSSPADWAKKLTDAVLRQKAGETLTAADRDFSNADFRNITFSKIFPPSFMERDGDIIKGFNFSNSKFTYSDISHLHFDECRFTYSTLSDVVCSNTKFSNSDMNEVVLQYSITTQQQPSFIDTTLKNTLIRHKANLSGVILNEPDNSSPPSVSGGGNFIRLGDIWLQMPLLWTENAVDGFLNHEHNNGKSILMTIDSLPDKYSQEKVQAMENLVKSLRGGRLTEACIRPVESSLVSVLAHPPYTQSALISEWLGPVQERFFAHQCQTYNDVPLPAPDTYYQQRILPVLLDSFDRNSAAMTTHSGLFNQVILHCMTGVDCTDGTRQKAAALYEQYLAHPAVSPHIHNGLFGNYDGSPDWTTRAADNFLLLSSQDSDTAMMLSTDTLLTMLNPTPDTAWDNFYLLRAGENVSTAQISPVELFRHDFPVFLAAFNQQAVQRRFGELIDIILSTEEHGELNQQFLAATNQKHSTVKLIDDASVSRLATIFDPLLPEGKLSPAHYQHILSAYHLTDATPQKQAETLFCLSTAFARYSSSAIFGTEHDSPPALRGYAEALMQKAWELSPAIFPSSEQFTDWSDRFHGLHGAFTCTSVVADSMQRHARKYFPSVLSSILPLAWA.

The disordered stretch occupies residues 137 to 171; it reads VSVSANNRPTVSEGRTPPVSPSLSLQATSSPSSPA. Positions 157-171 are enriched in low complexity; it reads PSLSLQATSSPSSPA. The active-site Glycyl thioester intermediate is Cys-753.

The protein belongs to the SopA E3 ligase family. Ubiquitinated in the presence of host E1 ubiquitin-activating enzyme, E2 ubiquitin-conjugating enzyme and ubiquitin.

The protein localises to the secreted. Its subcellular location is the host cell. It catalyses the reaction S-ubiquitinyl-[E2 ubiquitin-conjugating enzyme]-L-cysteine + [acceptor protein]-L-lysine = [E2 ubiquitin-conjugating enzyme]-L-cysteine + N(6)-ubiquitinyl-[acceptor protein]-L-lysine.. In terms of biological role, effector proteins function to alter host cell physiology and promote bacterial survival in host tissues. This protein is an E3 ubiquitin ligase that interferes with host's ubiquitination pathway. This Salmonella newport (strain SL254) protein is E3 ubiquitin-protein ligase SopA (sopA).